A 430-amino-acid polypeptide reads, in one-letter code: MFENLCTLPLSSELFTQALHPTEPILSVGLSSGHVQCFRLPAAEAAAEDEDGDTSVVSTGTSTIDTEWRTRRHKGSCRTLGYNHDGEVLYSAGTDSLLKAAASSTGQVTSKILIPNTNTDKLDPPTLLHALSPQTLLLTTDSCALHLYDLRDNSSFKSGKPAQTHYPHDDYISSLSPLPPTEMSTSGFSKQWITTGGTTLAVTDLRRGVLVKSEDQEEELLSSVFVGGLPARGKYGREKVCVGNGNGVITLWEKGVWDDQSERIIVDGGGKAGGESLDAMIAMPEELEGGYGGKCVVVGCGDGSVRIVRVGGTKGVVEDMKHDDIEAVVAVGFDVEGRLISGGGDTVKVWQEKVEEEEEEEEEEEQEDIEDNDDVMGGGGKHALERDSDDSDARADSSDEEDGGRKKRKKKKKGKKNQVGNGILKFKGME.

WD repeat units lie at residues 9-48 (PLSSELFTQALHPTEPILSVGLSSGHVQCFRLPAAEAAAE), 72-111 (RHKGSCRTLGYNHDGEVLYSAGTDSLLKAAASSTGQVTSK), 117-158 (TNTD…SFKS), 215-262 (DQEE…DQSE), 272-318 (AGGE…GVVE), and 323-360 (DDIEAVVAVGFDVEGRLISGGGDTVKVWQEKVEEEEEE). The span at 356-374 (EEEEEEEEEEQEDIEDNDD) shows a compositional bias: acidic residues. The disordered stretch occupies residues 356–430 (EEEEEEEEEE…NGILKFKGME (75 aa)). A compositionally biased stretch (basic and acidic residues) spans 382–397 (HALERDSDDSDARADS). The span at 405–416 (RKKRKKKKKGKK) shows a compositional bias: basic residues.

Belongs to the WD repeat WDR55 family.

The protein localises to the nucleus. It localises to the nucleolus. The sequence is that of WD repeat-containing protein jip5 (jip5) from Botryotinia fuckeliana (strain B05.10) (Noble rot fungus).